Here is a 205-residue protein sequence, read N- to C-terminus: Low-density lipoprotein receptor class A domain-containing protein 1 (205 aa).

The helical transmembrane segment at 43 to 63 (LLLLLATVAALIALVTILGLP) threads the bilayer. An LDL-receptor class A 1 domain is found at 71–114 (ACITLTNRTGFLCHDQRSCIPASGVCDGVRTCTHGEDEDESLCR). 6 cysteine pairs are disulfide-bonded: C72/C89, C83/C102, C96/C113, C141/C160, C163/C180, and C170/C193. One can recognise an LDL-receptor class A 2; atypical domain in the interval 115 to 161 (DVPQSLPHFLVAHCGDPASWIYSDQKCDGTNNCGDCSDELSPVTVCP). The 42-residue stretch at 162–203 (PCGPGWWRCPSTFFKYCDCIPRHLCRDHVQHCSDWSDEYACP) folds into the LDL-receptor class A 3; atypical domain.

It belongs to the LDLR family.

The protein localises to the membrane. This is Low-density lipoprotein receptor class A domain-containing protein 1 (LDLRAD1) from Homo sapiens (Human).